Here is a 79-residue protein sequence, read N- to C-terminus: Hematopoietic cell signal transducer (79 aa).

The first 18 residues, 1 to 18 (MAPPGHLLFLFLLPVAAS), serve as a signal peptide directing secretion. Residues 19 to 35 (QTNEGSCSGCGPLSLPL) are Extracellular-facing. The chain crosses the membrane as a helical span at residues 36–56 (LAGLVAADAVMSLLIVGVVFV). The Cytoplasmic segment spans residues 57-79 (CMRLHSRPAQEDGRVYINMPGRG). Tyr-72 bears the Phosphotyrosine mark. A GRB2 binding site region spans residues 72–74 (YIN). The tract at residues 72–75 (YINM) is PIK3R1 binding site.

This sequence belongs to the DAP10 family. Homodimer; Disulfide-linked. Heterohexamer composed of four subunits of HCST/DAP10 and two subunits of KLRK1. Interacts (via transmembrane domain) with KLRK1 (via transmembrane domain); the interaction is required for KLRK1 NK cell surface and induces NK cell-mediated cytotoxicity. Interacts with PIK3R1 and GRB2. Interacts with CLEC5A. Forms an CLEC5A/TYROBP/HCST trimolecular complex depending almost solely on TYROBP. Interacts with CD300H. In terms of processing, phosphorylated; PIK3R1 and GRB2 associate specifically with tyrosine-phosphorylated HCST. Post-translationally, O-glycosylated.

It localises to the membrane. Transmembrane adapter protein which associates with KLRK1 to form an activation receptor KLRK1-HCST in lymphoid and myeloid cells; this receptor plays a major role in triggering cytotoxicity against target cells expressing cell surface ligands such as MHC class I chain-related MICA and MICB, and UL16-binding proteins (ULBPs); these ligands are up-regulated by stress conditions and pathological state such as viral infection and tumor transformation. Functions as a docking site for PI3-kinase PIK3R1 and GRB2. Interaction of ULBPs with KLRK1-HCST triggers calcium mobilization and activation of the PIK3R1, MAP2K/ERK, and JAK2/STAT5 signaling pathways. Both PIK3R1 and GRB2 are required for full KLRK1-HCST-mediated activation and ultimate killing of target cells. In NK cells, KLRK1-HCST signaling directly induces cytotoxicity and enhances cytokine production initiated via DAP12/TYROBP-associated receptors. In T-cells, it provides primarily costimulation for TCR-induced signals. KLRK1-HCST receptor plays a role in immune surveillance against tumors and is required for cytolysis of tumors cells; indeed, melanoma cells that do not express KLRK1 ligands escape from immune surveillance mediated by NK cells. The polypeptide is Hematopoietic cell signal transducer (Hcst) (Rattus norvegicus (Rat)).